The chain runs to 428 residues: 3-phosphoshikimate 1-carboxyvinyltransferase (428 aa).

3-phosphoshikimate-binding residues include lysine 22, serine 23, and arginine 27. Lysine 22 contributes to the phosphoenolpyruvate binding site. Residues glycine 96 and arginine 124 each contribute to the phosphoenolpyruvate site. The 3-phosphoshikimate site is built by serine 169, serine 170, glutamine 171, serine 197, aspartate 313, asparagine 336, and lysine 340. Glutamine 171 contacts phosphoenolpyruvate. Aspartate 313 acts as the Proton acceptor in catalysis. Arginine 344, arginine 386, and lysine 411 together coordinate phosphoenolpyruvate.

The protein belongs to the EPSP synthase family. In terms of assembly, monomer.

It is found in the cytoplasm. It carries out the reaction 3-phosphoshikimate + phosphoenolpyruvate = 5-O-(1-carboxyvinyl)-3-phosphoshikimate + phosphate. Its pathway is metabolic intermediate biosynthesis; chorismate biosynthesis; chorismate from D-erythrose 4-phosphate and phosphoenolpyruvate: step 6/7. Its function is as follows. Catalyzes the transfer of the enolpyruvyl moiety of phosphoenolpyruvate (PEP) to the 5-hydroxyl of shikimate-3-phosphate (S3P) to produce enolpyruvyl shikimate-3-phosphate and inorganic phosphate. The sequence is that of 3-phosphoshikimate 1-carboxyvinyltransferase from Proteus mirabilis (strain HI4320).